The sequence spans 190 residues: Female-specific histamine-binding protein 1 (190 aa).

Positions 1–18 are cleaved as a signal peptide; it reads MKLLLSLAFVLALSQVKA. Residues Tyr-54, Asp-57, Trp-60, Glu-100, Tyr-118, Glu-153, and Trp-155 each contribute to the histamine site. 2 cysteine pairs are disulfide-bonded: Cys-66/Cys-187 and Cys-137/Cys-166.

Belongs to the calycin superfamily. Histamine-binding salivary protein family. Monomer. As to expression, expressed in salivary glands.

The protein localises to the secreted. In terms of biological role, salivary tick protein that acts by scavenging histamine at the wound site, outcompeting histamine receptors for histamine, thereby overcoming host inflammatory responses. Binds histamine with a high-affinity (Kd=18 nM). Contains two binding histamine sites (H and L), that appear to bind histamine with differing affinities (high and low). In vivo, when tested on a mouse asthma model, shows a profound inhibitory effect on allergic asthma. Aerosol administration of this protein prevents airway hyperreactivity and abrogates peribronchial inflammation, eosinophil recruitment, mucus hypersecretion, and interleukins (IL-4 and IL-5) secretion. In addition, when tested on a mouse model of acute respiratory distress syndrome (ARDS), it attenuates endotoxin-induced acute lung injury. This Rhipicephalus appendiculatus (Brown ear tick) protein is Female-specific histamine-binding protein 1.